The chain runs to 369 residues: Probable dual-specificity RNA methyltransferase RlmN (369 aa).

The active-site Proton acceptor is glutamate 106. The region spanning 118–354 (EARRLTVCVS…VTVRRSRGQD (237 aa)) is the Radical SAM core domain. Cysteine 125 and cysteine 359 are joined by a disulfide. [4Fe-4S] cluster is bound by residues cysteine 132, cysteine 136, and cysteine 139. Residues 183-184 (GE), serine 215, 238-240 (SLH), and asparagine 316 each bind S-adenosyl-L-methionine. Cysteine 359 (S-methylcysteine intermediate) is an active-site residue.

The protein belongs to the radical SAM superfamily. RlmN family. Requires [4Fe-4S] cluster as cofactor.

It localises to the cytoplasm. It catalyses the reaction adenosine(2503) in 23S rRNA + 2 reduced [2Fe-2S]-[ferredoxin] + 2 S-adenosyl-L-methionine = 2-methyladenosine(2503) in 23S rRNA + 5'-deoxyadenosine + L-methionine + 2 oxidized [2Fe-2S]-[ferredoxin] + S-adenosyl-L-homocysteine. It carries out the reaction adenosine(37) in tRNA + 2 reduced [2Fe-2S]-[ferredoxin] + 2 S-adenosyl-L-methionine = 2-methyladenosine(37) in tRNA + 5'-deoxyadenosine + L-methionine + 2 oxidized [2Fe-2S]-[ferredoxin] + S-adenosyl-L-homocysteine. Functionally, specifically methylates position 2 of adenine 2503 in 23S rRNA and position 2 of adenine 37 in tRNAs. The chain is Probable dual-specificity RNA methyltransferase RlmN from Salinibacter ruber (strain DSM 13855 / M31).